An 857-amino-acid polypeptide reads, in one-letter code: RNA-directed RNA polymerase 2a (857 aa).

The RdRp catalytic domain occupies 511–624; the sequence is KYCLEIDLSK…FSLLPPVGDS (114 aa). Residues 780–789 show a composition bias toward basic and acidic residues; that stretch reads IERRCDDKRR. Residues 780-857 are disordered; it reads IERRCDDKRR…PCERGGVTRA (78 aa). 2 stretches are compositionally biased toward polar residues: residues 804–816 and 824–840; these read KVSQ…TRSQ and FESQ…SGWS.

Belongs to the ssRNA positive-strand viruses RNA-directed RNA polymerase family. As to quaternary structure, interacts with replication protein 1a.

It catalyses the reaction RNA(n) + a ribonucleoside 5'-triphosphate = RNA(n+1) + diphosphate. Functionally, RNA-dependent RNA polymerase which replicates the viral genome composed of 3 RNA segments, RNA1, RNA2 and RNA3. This is RNA-directed RNA polymerase 2a from Cucumber mosaic virus (strain MB-8) (CMV).